The chain runs to 1773 residues: ATP-binding cassette sub-family A member 17 (1773 aa).

Transmembrane regions (helical) follow at residues 22–42 (TLVTVLETLMPVLFSAIVLYL), 262–282 (FPLLLMLSFICVELIITNSIL), and 306–326 (AWFITFFLSALVTVSGMTVLF). Asn340 carries an N-linked (GlcNAc...) asparagine glycan. Transmembrane regions (helical) follow at residues 342 to 362 (TLIFIFLMCFAIATIFFAFMM), 372 to 392 (GTVIGGIVFFFTYLPYMYITF), 403 to 423 (ILSCLFSNVAMAMGVRFISLF), and 444 to 464 (FTQVLVMLLLDSFLYCLVAFL). The 234-residue stretch at 525–758 (IEIQHLYKVF…YGAGYYMTII (234 aa)) folds into the ABC transporter 1 domain. Position 561–568 (561–568 (GHNGAGKT)) interacts with ATP. Residue Asn615 is glycosylated (N-linked (GlcNAc...) asparagine). A run of 7 helical transmembrane segments spans residues 912-932 (LVLSVQILLPLVIIMLSLSFF), 1088-1108 (LVVNFLFGIAFLSSSFSILTV), 1134-1154 (LLWDLISFLVPTLLLVLVFFW), 1166-1186 (IPAVVLIMMLYGWAIIPLVYT), 1198-1218 (CVKLVAMLTFLSISPVVLVTV), 1236-1256 (IFLIFPGHCLGMAFSNLYYNF), and 1293-1313 (IGKYLTALAILGPVYITLLFL). N-linked (GlcNAc...) asparagine glycosylation occurs at Asn1340. One can recognise an ABC transporter 2 domain in the interval 1369–1602 (LVVKELSKVY…FGSGYSLQAK (234 aa)). 1404 to 1411 (GLNGAGKT) lines the ATP pocket. The tract at residues 1690 to 1773 (NIQQGQAALD…SQPPSEPVLL (84 aa)) is disordered. Low complexity predominate over residues 1700–1710 (SSLSPSNSRPI). Pro residues-rich tracts occupy residues 1711–1740 (SSPPSSPPSSPPSSPPSRPPSRPSQPPSRP) and 1763–1773 (PSQPPSEPVLL).

The protein belongs to the ABC transporter superfamily. ABCA family. N-glycosylated.

It is found in the endoplasmic reticulum membrane. The protein localises to the cytoplasm. The catalysed reaction is cholesterol(in) + ATP + H2O = cholesterol(out) + ADP + phosphate + H(+). Functionally, promotes cholesterol efflux from sperm which renders sperm capable of fertilization. Has also been shown to decrease levels of intracellular esterified neutral lipids including cholesteryl esters, fatty acid esters and triacylglycerols. The chain is ATP-binding cassette sub-family A member 17 from Rattus norvegicus (Rat).